A 342-amino-acid chain; its full sequence is GTPase Obg (342 aa).

In terms of domain architecture, Obg spans 1–159; it reads MKFLDLCKVY…RTIWLRLKLI (159 aa). Residues 160 to 327 enclose the OBG-type G domain; sequence ADAGLLGLPN…VLRALWAEID (168 aa). Residues 166–173, 191–195, 212–215, 279–282, and 308–310 each bind GTP; these read GLPNAGKS, FTTLV, DIPG, NKID, and SGV. Mg(2+)-binding residues include S173 and T193.

It belongs to the TRAFAC class OBG-HflX-like GTPase superfamily. OBG GTPase family. Monomer. Mg(2+) serves as cofactor.

It is found in the cytoplasm. An essential GTPase which binds GTP, GDP and possibly (p)ppGpp with moderate affinity, with high nucleotide exchange rates and a fairly low GTP hydrolysis rate. Plays a role in control of the cell cycle, stress response, ribosome biogenesis and in those bacteria that undergo differentiation, in morphogenesis control. The polypeptide is GTPase Obg (Cereibacter sphaeroides (strain ATCC 17025 / ATH 2.4.3) (Rhodobacter sphaeroides)).